Consider the following 511-residue polypeptide: Glucans biosynthesis protein G (511 aa).

The N-terminal stretch at 1–22 (MMKMRWLSAAVMLTLYTSSSWA) is a signal peptide.

This sequence belongs to the OpgD/OpgG family.

It is found in the periplasm. Its pathway is glycan metabolism; osmoregulated periplasmic glucan (OPG) biosynthesis. In terms of biological role, involved in the biosynthesis of osmoregulated periplasmic glucans (OPGs). This chain is Glucans biosynthesis protein G, found in Escherichia coli O81 (strain ED1a).